A 297-amino-acid chain; its full sequence is 3-methyl-2-oxobutanoate hydroxymethyltransferase (297 aa).

A compositionally biased stretch (polar residues) spans 1 to 15 (MSEQISEQSEQNVYG). Residues 1-40 (MSEQISEQSEQNVYGASSPVPAGESSPSAASAPRTKVRTH) form a disordered region. The segment covering 16–33 (ASSPVPAGESSPSAASAP) has biased composition (low complexity). The Mg(2+) site is built by D78 and D117. Residues 78–79 (DS), D117, and K147 contribute to the 3-methyl-2-oxobutanoate site. E149 is a binding site for Mg(2+). E215 (proton acceptor) is an active-site residue.

This sequence belongs to the PanB family. As to quaternary structure, homodecamer; pentamer of dimers. Mg(2+) is required as a cofactor.

It is found in the cytoplasm. The catalysed reaction is 3-methyl-2-oxobutanoate + (6R)-5,10-methylene-5,6,7,8-tetrahydrofolate + H2O = 2-dehydropantoate + (6S)-5,6,7,8-tetrahydrofolate. Its pathway is cofactor biosynthesis; (R)-pantothenate biosynthesis; (R)-pantoate from 3-methyl-2-oxobutanoate: step 1/2. Functionally, catalyzes the reversible reaction in which hydroxymethyl group from 5,10-methylenetetrahydrofolate is transferred onto alpha-ketoisovalerate to form ketopantoate. The protein is 3-methyl-2-oxobutanoate hydroxymethyltransferase of Mycobacterium marinum (strain ATCC BAA-535 / M).